We begin with the raw amino-acid sequence, 229 residues long: MELLLLSNSTLPGKAWLEHALPLIAEQLQGRRSAVFIPFAGVTQTCDDYTAKTAAVLAPLGVSVTGIHSVVDPVAAIENAEIVIVGGGNTFQLLKQCRERGLLAPITDVVKRGALYIGWSAGANLACPTIRTTNDMPIVDPQGFDALNLFPLQINPHFTNALPEGHKGETREQRIRELLVVAPELTIIGLPEGNWITVSKGHATLGGPNTTYVFKAGEEAVPLEAGHRF.

Residues Ser-120, Asp-135, and His-157 each act as charge relay system in the active site.

It belongs to the peptidase S51 family.

The protein resides in the cytoplasm. The enzyme catalyses Dipeptidase E catalyzes the hydrolysis of dipeptides Asp-|-Xaa. It does not act on peptides with N-terminal Glu, Asn or Gln, nor does it cleave isoaspartyl peptides.. Its function is as follows. Hydrolyzes dipeptides containing N-terminal aspartate residues. May play a role in allowing the cell to use peptide aspartate to spare carbon otherwise required for the synthesis of the aspartate family of amino acids. The protein is Peptidase E of Shigella sonnei (strain Ss046).